A 443-amino-acid chain; its full sequence is uncharacterized protein (443 aa).

This is an uncharacterized protein from Mycoplasma genitalium (strain ATCC 33530 / DSM 19775 / NCTC 10195 / G37) (Mycoplasmoides genitalium).